We begin with the raw amino-acid sequence, 1460 residues long: Probable outer membrane protein PmpC (1460 aa).

A signal peptide spans methionine 1–alanine 20. Disordered stretches follow at residues serine 21–isoleucine 48, serine 92–aspartate 212, threonine 279–serine 372, threonine 455–isoleucine 549, and valine 993–alanine 1021. The span at serine 34 to serine 44 shows a compositional bias: low complexity. Polar residues predominate over residues glutamine 97 to glycine 114. Low complexity predominate over residues asparagine 115–glutamate 137. Over residues glutamine 138–threonine 155 the composition is skewed to polar residues. Positions asparagine 290–serine 327 are enriched in low complexity. Positions glutamate 328 to isoleucine 358 are enriched in polar residues. Residues leucine 461–proline 471 are compositionally biased toward low complexity. A compositionally biased stretch (polar residues) spans serine 487–serine 501. Composition is skewed to low complexity over residues alanine 504–serine 548 and threonine 995–threonine 1018. The Autotransporter domain occupies aspartate 1167 to phenylalanine 1460.

This sequence belongs to the PMP outer membrane protein family.

It is found in the secreted. It localises to the cell wall. The protein localises to the cell outer membrane. The sequence is that of Probable outer membrane protein PmpC (pmpC) from Chlamydia muridarum (strain MoPn / Nigg).